Reading from the N-terminus, the 398-residue chain is MARGALDWIGAELEALDAKGLRRSLEPIGPAQGPVVQVGGRALVNLCSNDYLGLAADPRVRAAAADAAMRFGAGSGAARLVAGDLPPHGALEARLAAWKGREAALLFGSGYHANAGVPGALVGRDDAVFSDVLNHASIVDGCLLSRAELVRYRHCDVEELAGLLARTRARRKLVVTDAIFSMDGDAAPLRELAELCDRHGAMLYVDEAHAAGVLGPNGAGLAEALGVQDRVDVHMGTLGKALGAFGAYVAGERRLIELLVSRARPFVFSTALPPPACAAALAALEVVATEPSRRTHLFALCARMQAGLARLGFDVARVASPIFPVVLGTEVRALAAAAALRERGWFVRAIRPPTVPHGTSRLRVALSAAHDAAQVDGFLAALAAVLPDLPPAEPRRAG.

R23 is a substrate binding site. A pyridoxal 5'-phosphate-binding site is contributed by 110–111 (GY). H135 is a binding site for substrate. Pyridoxal 5'-phosphate is bound by residues S181, H209, and T237. N6-(pyridoxal phosphate)lysine is present on K240. T354 serves as a coordination point for substrate.

The protein belongs to the class-II pyridoxal-phosphate-dependent aminotransferase family. BioF subfamily. Homodimer. Requires pyridoxal 5'-phosphate as cofactor.

The enzyme catalyses 6-carboxyhexanoyl-[ACP] + L-alanine + H(+) = (8S)-8-amino-7-oxononanoate + holo-[ACP] + CO2. The protein operates within cofactor biosynthesis; biotin biosynthesis. Functionally, catalyzes the decarboxylative condensation of pimeloyl-[acyl-carrier protein] and L-alanine to produce 8-amino-7-oxononanoate (AON), [acyl-carrier protein], and carbon dioxide. This chain is 8-amino-7-oxononanoate synthase, found in Anaeromyxobacter sp. (strain K).